The following is a 284-amino-acid chain: Serine/threonine-protein phosphatase Pgam5, mitochondrial (284 aa).

A helical transmembrane segment spans residues 8-24; it reads LGVPTATLAVGTLLLGD.

The protein belongs to the phosphoglycerate mutase family. BPG-dependent PGAM subfamily. As to quaternary structure, interacts with skn-1 isoforms a and c.

Its subcellular location is the mitochondrion outer membrane. It catalyses the reaction O-phospho-L-seryl-[protein] + H2O = L-seryl-[protein] + phosphate. The enzyme catalyses O-phospho-L-threonyl-[protein] + H2O = L-threonyl-[protein] + phosphate. Its function is as follows. Displays phosphatase activity for serine/threonine residues. Has apparently no phosphoglycerate mutase activity. This chain is Serine/threonine-protein phosphatase Pgam5, mitochondrial (pgam-5), found in Caenorhabditis elegans.